The primary structure comprises 470 residues: Glutamate--tRNA ligase 2 (470 aa).

The 'HIGH' region signature appears at 10–20 (PSPTGFLHIGS). The 'KMSKS' region motif lies at 239-243 (KLSKR). Residue lysine 242 coordinates ATP.

It belongs to the class-I aminoacyl-tRNA synthetase family. Glutamate--tRNA ligase type 1 subfamily. Monomer.

Its subcellular location is the cytoplasm. The enzyme catalyses tRNA(Glu) + L-glutamate + ATP = L-glutamyl-tRNA(Glu) + AMP + diphosphate. Its function is as follows. Catalyzes the attachment of glutamate to tRNA(Glu) in a two-step reaction: glutamate is first activated by ATP to form Glu-AMP and then transferred to the acceptor end of tRNA(Glu). This chain is Glutamate--tRNA ligase 2, found in Rickettsia prowazekii (strain Madrid E).